A 475-amino-acid chain; its full sequence is ATP synthase subunit beta (475 aa).

G148–T155 lines the ATP pocket.

Belongs to the ATPase alpha/beta chains family. In terms of assembly, F-type ATPases have 2 components, CF(1) - the catalytic core - and CF(0) - the membrane proton channel. CF(1) has five subunits: alpha(3), beta(3), gamma(1), delta(1), epsilon(1). CF(0) has three main subunits: a(1), b(2) and c(9-12). The alpha and beta chains form an alternating ring which encloses part of the gamma chain. CF(1) is attached to CF(0) by a central stalk formed by the gamma and epsilon chains, while a peripheral stalk is formed by the delta and b chains.

It localises to the cell inner membrane. It catalyses the reaction ATP + H2O + 4 H(+)(in) = ADP + phosphate + 5 H(+)(out). Produces ATP from ADP in the presence of a proton gradient across the membrane. The catalytic sites are hosted primarily by the beta subunits. This is ATP synthase subunit beta from Psychrobacter sp. (strain PRwf-1).